The sequence spans 7158 residues: Twitchin (7158 aa).

2 consecutive Ig-like domains span residues 5–97 (PRFT…INLN) and 111–204 (PSFV…LALN). 2 disulfide bridges follow: C25/C81 and C132/C188. Disordered stretches follow at residues 204-381 (NFEE…PIVL), 473-639 (EEEL…TKLR), 658-732 (KKVK…DSMA), and 763-955 (EVKE…IDMR). The segment covering 220-238 (TASPRPSSRGPGSRPSSPK) has biased composition (low complexity). 2 stretches are compositionally biased toward basic and acidic residues: residues 242–259 (KSRE…EGSP) and 279–291 (ESRR…KMEV). Low complexity-rich tracts occupy residues 319–340 (SPST…RKGS) and 347–368 (SGTT…ASSD). The 90-residue stretch at 377-466 (PPIVLEASRS…GEGQSSAMVK (90 aa)) folds into the Ig-like 3 domain. Residues 504-513 (RVARRSKSKS) are compositionally biased toward basic residues. Over residues 514 to 523 (KSPAPQAKKS) the composition is skewed to low complexity. 2 stretches are compositionally biased toward basic and acidic residues: residues 529–540 (GRQEASEVEHKR) and 601–618 (KTDS…DTLL). Residues 620 to 630 (KTTTSTKNESS) show a composition bias toward low complexity. The Kelch 1 repeat unit spans residues 718 to 764 (VKSGAGGLEKSDSMASLKKLDLKKGKIDDNSDGAFKVQLKKVVKKEV). 4 stretches are compositionally biased toward basic and acidic residues: residues 763-813 (EVKE…DKPK), 837-850 (KEVE…ELKA), 885-897 (KAHD…EGIK), and 917-955 (SESR…IDMR). One can recognise an Ig-like 4 domain in the interval 980-1072 (PKIVEVPENV…DSADVKLLVT (93 aa)). The disordered stretch occupies residues 1088 to 1118 (SQAGFQKDGEGGGAGGGGGEKKPMTEAERRQ). Residues 1106–1118 (GEKKPMTEAERRQ) are compositionally biased toward basic and acidic residues. Ig-like domains lie at 1122–1213 (PGKK…AQLT), 1217–1306 (PPMK…SKVQ), and 1312–1398 (PRHT…AQLI). C1150 and C1201 are disulfide-bonded. 8 Fibronectin type-III domains span residues 1598-1690 (PKGP…AKNP), 1696-1791 (KPKN…MKAK), 1891-1988 (PPKG…IKDP), 1994-2087 (KPGR…AKPK), 2189-2282 (PNGP…AKNP), 2288-2383 (KTGT…AKPR), 2483-2576 (PLGP…AKNP), and 2579-2675 (VPGK…AKPR). One copy of the Kelch 2 repeat lies at 2014–2058 (PPHKDGGAPIEEYIVEVRDPDTKEWKEVKRVPDTNASISGLKEGK). One can recognise an Ig-like 8 domain in the interval 2086-2181 (PKFIPAWLKH…GADEEKANLT (96 aa)). Residues 2207 to 2253 (WKPPDDDGGEPIEYYEVEKLDTATGRWVPCAKVKDTKAHIDGLKKGQ) form a Kelch 3 repeat. The segment covering 2266 to 2287 (GASDALSTDKDTKAKNPYDEPG) has biased composition (basic and acidic residues). A disordered region spans residues 2266–2295 (GASDALSTDKDTKAKNPYDEPGKTGTPDVV). The Kelch 4 repeat unit spans residues 2502 to 2547 (KVPEDDGGAPIDHYEIEKMDLATGRWVPCGRSETTKTTVPNLQPGH). Residues 2679 to 2763 (PRIHREDLSD…TNINGTDSVT (85 aa)) enclose the Ig-like 9 domain. 2 Fibronectin type-III domains span residues 2775-2868 (PKGP…AKNP) and 2874-2968 (RPGR…AKPR). The Kelch 5 repeat unit spans residues 2793-2839 (WKPPEDDGGEPIEFYEIEKMNTKDGIWVPCGRSGDTHFTVDSLNKGD). The segment at 2849 to 2901 (NSEGPSDPLETETDILAKNPFDRPDRPGRPEPTDWDSDHVDLKWDPPLSDGGA) is disordered. Positions 2868–2892 (PFDRPDRPGRPEPTDWDSDHVDLKW) are enriched in basic and acidic residues. In terms of domain architecture, Ig-like 10 spans 2972–3062 (PHIDRDALKN…GEDEATVKIN (91 aa)). Fibronectin type-III domains are found at residues 3070-3165 (PNGP…AKDP) and 3171-3265 (KTNA…AKAR). The stretch at 3089–3134 (RAPDDDGGIPIENYVIEKYDTASGRWVPAAKVAGDKTTAVVDGLIP) is one Kelch 6 repeat. The 91-residue stretch at 3268–3358 (PPVIDRNSIQ…GTDTAEVKVT (91 aa)) folds into the Ig-like 11 domain. 2 consecutive Fibronectin type-III domains span residues 3365–3459 (SPRG…AKDP) and 3465–3559 (KPGT…AKPR). One copy of the Kelch 7 repeat lies at 3384–3430 (WKEPEDDGGAEISHYVIEKQDAATGRWTACGESKDTNFHVDDLTQGH). One can recognise an Ig-like 12 domain in the interval 3563 to 3653 (PKINRDMFVA…GKDEHEVDVN (91 aa)). 6 consecutive Fibronectin type-III domains span residues 3661-3753 (PEGP…AKNP), 3759-3853 (APTD…AKPR), 3954-4047 (PEGP…AKNQ), 4053-4146 (PVDK…TKAR), 4246-4340 (PEGP…AKDP), and 4346-4440 (KPGR…TAKP). The stretch at 3972–4018 (WKPPTDNGGTDVLHYIVEKMDTSRGTWQEVGTFPDCTAKVNKLVPGK) is one Kelch 8 repeat. Kelch repeat units follow at residues 4265–4310 (KPPK…LTEG) and 4365–4410 (DPPR…RVQK). In terms of domain architecture, Ig-like 13 spans 4445-4531 (PKFDLDLDGK…GEAEANIKIT (87 aa)). Fibronectin type-III domains are found at residues 4538-4631 (APEN…IKDP), 4637-4733 (APST…CRPY), 4739-4834 (APDA…IEEQ), 4936-5028 (PTGP…AKNP), 5034-5129 (APGQ…ADNA), 5231-5326 (SPQH…VAKY), 5333-5427 (QPEA…LKSR), and 5430-5528 (PPGP…IQES). One copy of the Kelch 11 repeat lies at 4557 to 4602 (DAPKDDGGAEIAGYKIEYQEVGSQIWDKVPGLISGTAYTVRGLEHG). A Kelch 12 repeat occupies 5287-5335 (LNYTVGGLIKDNRYRFRVRAETQYGVSEPCELADVVVAKYQFEVPNQPE). The Ig-like 14 domain occupies 5533 to 5621 (PQIVVKPEDT…GSDTATANLV (89 aa)). Fibronectin type-III domains lie at 5723–5817 (PQGP…ARLP) and 5823–5919 (SPLN…ASGS). The stretch at 5742 to 5787 (RPPVTDGGSKITSYVVEKRDLSKDEWVTVTSNVKDMNYIVTGLFEN) is one Kelch 13 repeat. 2 consecutive Ig-like domains span residues 5923–6011 (PKIV…ANLR) and 6016–6107 (PRVF…VNVT). C5944 and C5995 are disulfide-bonded. In terms of domain architecture, Fibronectin type-III 31 spans 6114–6207 (PPRFPIIENI…PTAPVLIPGD (94 aa)). A Protein kinase domain is found at 6261–6516 (YDIHEELGTG…IHQALEHPWL (256 aa)). Residues 6267–6275 (LGTGAFGVV) and K6290 each bind ATP. D6382 serves as the catalytic Proton acceptor. Residues 6517 to 6581 (TPGNAPGRDS…SIRDAFWDRS (65 aa)) are C-terminal regulatory domain (CDR). Ig-like domains are found at residues 6585–6673 (PRFI…VFLN), 6696–6795 (PRVE…CVLT), 6863–6952 (PSFT…ATLT), 6958–7059 (PLLN…ASLV), and 7067–7149 (PPVT…KAIA).

It belongs to the protein kinase superfamily. CAMK Ser/Thr protein kinase family. May interact (via protein kinase and CRD domains) with mak-1 (via protein kinase domain). Requires Mg(2+) as cofactor. In terms of processing, phosphorylated by mak-1 on the protein kinase domain and/or CDR domain in vitro. In terms of tissue distribution, expressed in body wall, anal, vulval, and pharyngeal muscles (at protein level).

The protein resides in the cytoplasm. Its subcellular location is the myofibril. It is found in the sarcomere. It localises to the a band. The enzyme catalyses L-seryl-[protein] + ATP = O-phospho-L-seryl-[protein] + ADP + H(+). It carries out the reaction L-threonyl-[protein] + ATP = O-phospho-L-threonyl-[protein] + ADP + H(+). With respect to regulation, forces generated by the contraction/relaxation cycles of muscle activity separate the regulatory domain from the catalytic core, activating the enzyme. At rest, the kinase domain is in a closed conformation. The active site is occupied by the autoinhibitory region (CDR), which makes extensive contact with the catalytic site, blocking substrate binding. At low forces the regulatory tail will unravel reversibly and expose the active site to its substrates, potentially stabilized by binding of Ca/CALM. At high forces the kinase begins to unfold and the integrity of the active site is disrupted. Functionally, regulator of muscle contraction and relaxation. Senses mechanical strain that occurs during muscle activity by unfolding in clearly resolvable steps at differing forces. Plays a role in the organization of sarcomeres in body wall muscles. The sequence is that of Twitchin from Caenorhabditis elegans.